A 243-amino-acid polypeptide reads, in one-letter code: DNA repair protein RecO (243 aa).

The protein belongs to the RecO family.

Involved in DNA repair and RecF pathway recombination. The polypeptide is DNA repair protein RecO (Vibrio parahaemolyticus serotype O3:K6 (strain RIMD 2210633)).